We begin with the raw amino-acid sequence, 364 residues long: DNA polymerase IV (364 aa).

The UmuC domain maps to 14–198 (IIHIDMDAFF…LPIEKFHGVG (185 aa)). Mg(2+)-binding residues include Asp18 and Asp116. Glu117 is a catalytic residue.

The protein belongs to the DNA polymerase type-Y family. Monomer. Requires Mg(2+) as cofactor.

It localises to the cytoplasm. The catalysed reaction is DNA(n) + a 2'-deoxyribonucleoside 5'-triphosphate = DNA(n+1) + diphosphate. In terms of biological role, poorly processive, error-prone DNA polymerase involved in untargeted mutagenesis. Copies undamaged DNA at stalled replication forks, which arise in vivo from mismatched or misaligned primer ends. These misaligned primers can be extended by PolIV. Exhibits no 3'-5' exonuclease (proofreading) activity. May be involved in translesional synthesis, in conjunction with the beta clamp from PolIII. The protein is DNA polymerase IV of Streptococcus pyogenes serotype M4 (strain MGAS10750).